The primary structure comprises 598 residues: Elongation factor 4 (598 aa).

The region spanning 2-183 is the tr-type G domain; that stretch reads KHIRNFCIIA…AIIEKIPHPK (182 aa). Residues 14–19 and 130–133 contribute to the GTP site; these read DHGKST and NKVD.

Belongs to the TRAFAC class translation factor GTPase superfamily. Classic translation factor GTPase family. LepA subfamily.

It is found in the cell inner membrane. The catalysed reaction is GTP + H2O = GDP + phosphate + H(+). Functionally, required for accurate and efficient protein synthesis under certain stress conditions. May act as a fidelity factor of the translation reaction, by catalyzing a one-codon backward translocation of tRNAs on improperly translocated ribosomes. Back-translocation proceeds from a post-translocation (POST) complex to a pre-translocation (PRE) complex, thus giving elongation factor G a second chance to translocate the tRNAs correctly. Binds to ribosomes in a GTP-dependent manner. The polypeptide is Elongation factor 4 (Flavobacterium psychrophilum (strain ATCC 49511 / DSM 21280 / CIP 103535 / JIP02/86)).